We begin with the raw amino-acid sequence, 1276 residues long: cGMP-specific 3',5'-cyclic phosphodiesterase (1276 aa).

Disordered stretches follow at residues Met-1–Gly-76, Asn-91–Val-185, and Ala-241–Ser-260. Low complexity-rich tracts occupy residues Ser-12–Ser-47 and Thr-57–Gly-76. Residues Ala-109–Thr-124 show a composition bias toward pro residues. Residues Ser-129 to Val-140 are compositionally biased toward basic and acidic residues. Residues Ala-147–Glu-166 show a composition bias toward polar residues. 2 stretches are compositionally biased toward low complexity: residues Ser-167–Ser-180 and Ser-249–Ser-260. GAF domains follow at residues Asp-290–Ile-442 and Asn-474–Ile-658. The region spanning Ser-688–Val-1119 is the PDEase domain. The active-site Proton donor is the His-764. The a divalent metal cation site is built by His-768, His-804, Asp-805, and Asp-1023. 2 disordered regions span residues Ala-1162–Leu-1193 and Leu-1205–Leu-1276. Composition is skewed to basic and acidic residues over residues Asp-1171 to Arg-1180 and Leu-1221 to Ser-1233. The span at Gly-1248 to Val-1263 shows a compositional bias: low complexity. Positions Ser-1266 to Leu-1276 are enriched in basic residues. Cys-1273 bears the Cysteine methyl ester mark. Cys-1273 carries S-farnesyl cysteine lipidation. The propeptide at Ser-1274–Leu-1276 is removed in mature form.

Belongs to the cyclic nucleotide phosphodiesterase family. Interacts with PrBP. A divalent metal cation serves as cofactor.

It is found in the cell membrane. The enzyme catalyses 3',5'-cyclic GMP + H2O = GMP + H(+). Has a role regulating cGMP transport in Malpighian tubule principal cells. The sequence is that of cGMP-specific 3',5'-cyclic phosphodiesterase from Drosophila persimilis (Fruit fly).